A 48-amino-acid chain; its full sequence is Small ribosomal subunit protein uS14 (48 aa).

Zn(2+)-binding residues include Cys13, Cys16, Cys31, and Cys34.

It belongs to the universal ribosomal protein uS14 family. Zinc-binding uS14 subfamily. As to quaternary structure, part of the 30S ribosomal subunit. It depends on Zn(2+) as a cofactor.

Binds 16S rRNA, required for the assembly of 30S particles. The sequence is that of Small ribosomal subunit protein uS14 from Methanopyrus kandleri (strain AV19 / DSM 6324 / JCM 9639 / NBRC 100938).